Here is a 299-residue protein sequence, read N- to C-terminus: Putative glycylpeptide N-tetradecanoyltransferase (299 aa).

It belongs to the NMT family.

It catalyses the reaction N-terminal glycyl-[protein] + tetradecanoyl-CoA = N-tetradecanoylglycyl-[protein] + CoA + H(+). Adds a myristoyl group to the N-terminal glycine residue of certain proteins. This chain is Putative glycylpeptide N-tetradecanoyltransferase, found in Amsacta moorei entomopoxvirus (AmEPV).